A 267-amino-acid chain; its full sequence is Matrilysin (267 aa).

An N-terminal signal peptide occupies residues 1–20 (MAAMRLTLFRIVCLLPGCLA). Positions 21-97 (LPLSQEAGEV…PRCGVPDVAE (77 aa)) are cleaved as a propeptide — activation peptide. Residues 88–95 (PRCGVPDV) carry the Cysteine switch motif. Zn(2+) is bound at residue Cys90. Asp156 provides a ligand contact to Ca(2+). Residues His166 and Asp168 each coordinate Zn(2+). Asp173, Gly174, Gly176, and Thr178 together coordinate Ca(2+). Position 181 (His181) interacts with Zn(2+). Ca(2+) is bound by residues Gly188, Gly190, and Asp192. His194 serves as a coordination point for Zn(2+). The Ca(2+) site is built by Asp196 and Glu199. His217 contributes to the Zn(2+) binding site. Glu218 is a catalytic residue. The Zn(2+) site is built by His221 and His227.

Belongs to the peptidase M10A family. The cofactor is Ca(2+). It depends on Zn(2+) as a cofactor.

The protein resides in the secreted. The protein localises to the extracellular space. Its subcellular location is the extracellular matrix. It catalyses the reaction Cleavage of 14-Ala-|-Leu-15 and 16-Tyr-|-Leu-17 in B chain of insulin. No action on collagen types I, II, IV, V. Cleaves gelatin chain alpha2(I) &gt; alpha1(I).. Degrades casein, gelatins of types I, III, IV, and V, and fibronectin. Activates procollagenase. In Rattus norvegicus (Rat), this protein is Matrilysin (Mmp7).